Here is a 177-residue protein sequence, read N- to C-terminus: Large ribosomal subunit protein uL6 (177 aa).

It belongs to the universal ribosomal protein uL6 family. As to quaternary structure, part of the 50S ribosomal subunit.

Its function is as follows. This protein binds to the 23S rRNA, and is important in its secondary structure. It is located near the subunit interface in the base of the L7/L12 stalk, and near the tRNA binding site of the peptidyltransferase center. The protein is Large ribosomal subunit protein uL6 of Beijerinckia indica subsp. indica (strain ATCC 9039 / DSM 1715 / NCIMB 8712).